The following is a 327-amino-acid chain: MKRIYLALCALLLLLGTGSRPAAAYPYYAQMAYDNPREATGKIVCANCHLNAMPARAEVPQAVTPGQVFTIKVGIPYDLSKQQVLADGSKGGLNVGAVVVLPEGFRLATEEEMTEEQRQETAETYITPYSDEKPNILLVGPLPGEQHQEIVFPVVAPDPKEDPSVAFMKYRVYIGANRGRGQINPDGSLSNNNVFRAPATGRLTSIATIESDLSDLPPELAALVPPEYELPGTRVLSFETEGGLKHLVVPPGPELVVNIGDSVQEGDPVTNNPNVGGFGQVERDLVLQNPERVKWLVAFLAAVAITQLLLVLKKKQVELIQAAELLG.

Residues M1–A24 form the signal peptide. 4 residues coordinate heme: Y25, C45, C48, and H49. A helical transmembrane segment spans residues V293–K313.

Belongs to the cytochrome f family. As to quaternary structure, the 4 large subunits of the cytochrome b6-f complex are cytochrome b6, subunit IV (17 kDa polypeptide, PetD), cytochrome f and the Rieske protein, while the 4 small subunits are PetG, PetL, PetM and PetN. The complex functions as a dimer. Heme is required as a cofactor.

It is found in the cellular thylakoid membrane. Component of the cytochrome b6-f complex, which mediates electron transfer between photosystem II (PSII) and photosystem I (PSI), cyclic electron flow around PSI, and state transitions. This is Cytochrome f from Synechococcus sp. (strain JA-3-3Ab) (Cyanobacteria bacterium Yellowstone A-Prime).